A 628-amino-acid polypeptide reads, in one-letter code: Chaperone protein DnaK (628 aa).

T197 is subject to Phosphothreonine; by autocatalysis. The interval 597–628 (EQMYKGEQGAQGGAADTSKKKSDDDVIDAEIE) is disordered.

This sequence belongs to the heat shock protein 70 family.

Its function is as follows. Acts as a chaperone. This is Chaperone protein DnaK from Sulfurimonas denitrificans (strain ATCC 33889 / DSM 1251) (Thiomicrospira denitrificans (strain ATCC 33889 / DSM 1251)).